Consider the following 285-residue polypeptide: Chromatin modification-related protein YNG2 (285 aa).

Disordered stretches follow at residues 1-24 (MSFE…SNLK) and 155-201 (RTVA…GANF). A compositionally biased stretch (polar residues) spans 8 to 24 (DPSSALEQATQDVSNLK). A coiled-coil region spans residues 10–36 (SSALEQATQDVSNLKSESRFLLEEIRA). The segment at 224 to 273 (QLYCFCQSVSYGEMVACDGPNCKYEWFHYGCVNLDEPPKGQWYCPECRQE) adopts a PHD-type zinc-finger fold. Zn(2+)-binding residues include C227, C229, C240, C245, H251, C254, C267, and C270.

This sequence belongs to the ING family. Interacts with H3K4me3 and to a lesser extent with H3K4me2. Component of the NuA4 histone acetyltransferase complex.

The protein resides in the nucleus. Its function is as follows. Component of the NuA4 histone acetyltransferase complex which is involved in transcriptional activation of selected genes principally by acetylation of nucleosomal histone H4 and H2A. The NuA4 complex is also involved in DNA repair. Involved in cell cycle progression and meiosis. This Eremothecium gossypii (strain ATCC 10895 / CBS 109.51 / FGSC 9923 / NRRL Y-1056) (Yeast) protein is Chromatin modification-related protein YNG2 (YNG2).